Here is a 191-residue protein sequence, read N- to C-terminus: Probable DNA-directed RNA polymerase subunit delta (191 aa).

The region spanning 14–83 is the HTH HARE-type domain; it reads LSMIEVARAI…GENKWGLRSW (70 aa). The interval 118–191 is disordered; that stretch reads DEDAIDYRDD…EDEEDEEPVL (74 aa).

The protein belongs to the RpoE family. As to quaternary structure, RNAP is composed of a core of 2 alpha, a beta and a beta' subunits. The core is associated with a delta subunit and one of several sigma factors.

Participates in both the initiation and recycling phases of transcription. In the presence of the delta subunit, RNAP displays an increased specificity of transcription, a decreased affinity for nucleic acids, and an increased efficiency of RNA synthesis because of enhanced recycling. In Streptococcus pyogenes serotype M18 (strain MGAS8232), this protein is Probable DNA-directed RNA polymerase subunit delta.